The following is an 89-amino-acid chain: Small ribosomal subunit protein uS15 (89 aa).

This sequence belongs to the universal ribosomal protein uS15 family. As to quaternary structure, part of the 30S ribosomal subunit. Forms a bridge to the 50S subunit in the 70S ribosome, contacting the 23S rRNA.

Its function is as follows. One of the primary rRNA binding proteins, it binds directly to 16S rRNA where it helps nucleate assembly of the platform of the 30S subunit by binding and bridging several RNA helices of the 16S rRNA. Forms an intersubunit bridge (bridge B4) with the 23S rRNA of the 50S subunit in the ribosome. This chain is Small ribosomal subunit protein uS15, found in Rhizobium rhizogenes (strain K84 / ATCC BAA-868) (Agrobacterium radiobacter).